The chain runs to 125 residues: Type II secretion system protein I (125 aa).

The propeptide at 1 to 5 (MKQQG) is leader sequence. Position 6 is an N-methylmethionine (M6). A helical transmembrane segment spans residues 6–26 (MTLLEVMVALVIFALAGLTVL).

Belongs to the GSP I family. As to quaternary structure, type II secretion is composed of four main components: the outer membrane complex, the inner membrane complex, the cytoplasmic secretion ATPase and the periplasm-spanning pseudopilus. Interacts with core component OutG. Post-translationally, cleaved by prepilin peptidase. Methylated by prepilin peptidase at the amino group of the N-terminal methionine once the leader sequence is cleaved by prepilin peptidase.

It localises to the cell inner membrane. Component of the type II secretion system required for the energy-dependent secretion of extracellular factors such as proteases and toxins from the periplasm. Part of the pseudopilus tip complex that is critical for the recognition and binding of secretion substrates. This chain is Type II secretion system protein I (outI), found in Dickeya chrysanthemi (Pectobacterium chrysanthemi).